The following is a 365-amino-acid chain: Myb/SANT-like DNA-binding domain-containing protein 3 (365 aa).

The Myb-like domain maps to 13–78 (FSELEKSVLL…QLKKCWENIK (66 aa)). Residues 301–337 (QLIQMNEVHVAKVQQIERECEMAEEEHRIKMEILNKK) adopt a coiled-coil conformation.

This sequence belongs to the MSANTD3 family.

The sequence is that of Myb/SANT-like DNA-binding domain-containing protein 3 (msantd3) from Xenopus laevis (African clawed frog).